Reading from the N-terminus, the 917-residue chain is Serine/arginine repetitive matrix protein 1 (917 aa).

Met1 is modified (N-acetylmethionine). The segment at 1–151 (MDAGFFRGTS…ASMKKQDEDK (151 aa)) is necessary for DNA and RNA-binding. The necessary for mRNA 3'-end cleavage and cytoplasmic accumulation stretch occupies residues 1-156 (MDAGFFRGTS…QDEDKDKRDK (156 aa)). The residue at position 7 (Arg7) is a Citrulline. In terms of domain architecture, PWI spans 27–126 (QLKFAECLEK…AGIPSAFLEL (100 aa)). A Glycyl lysine isopeptide (Lys-Gly) (interchain with G-Cter in SUMO2) cross-link involves residue Lys127. Residues 139 to 170 (EKLASMKKQDEDKDKRDKEEKESSREKRERSR) show a composition bias toward basic and acidic residues. Residues 139 to 917 (EKLASMKKQD…MRKAQVSPQS (779 aa)) are disordered. Lys140 bears the N6-acetyllysine mark. A compositionally biased stretch (basic residues) spans 171–207 (SPRRRKSRSPSPRRRSSPVRRERKRSHSRSPRHRTKS). Residues 214-234 (PEKKEKTPELPEPSVKVKEPS) show a composition bias toward basic and acidic residues. Thr220 carries the phosphothreonine modification. Phosphoserine is present on Ser227. Residue Lys231 forms a Glycyl lysine isopeptide (Lys-Gly) (interchain with G-Cter in SUMO1); alternate linkage. Lys231 participates in a covalent cross-link: Glycyl lysine isopeptide (Lys-Gly) (interchain with G-Cter in SUMO2); alternate. 2 positions are modified to phosphoserine: Ser234 and Ser240. The residue at position 241 (Thr241) is a Phosphothreonine. A compositionally biased stretch (basic and acidic residues) spans 246-275 (KVPKPEPIPEPKEPSPEKNSKKEKEKEKTR). Lys249 participates in a covalent cross-link: Glycyl lysine isopeptide (Lys-Gly) (interchain with G-Cter in SUMO2). The residue at position 260 (Ser260) is a Phosphoserine. Basic residues-rich tracts occupy residues 276–329 (PRSR…RTPP) and 336–351 (PRHR…RRRS). Residues 300–702 (RRHRSRSRSY…NKRHSPSPRP (403 aa)) are necessary for speckles and matrix localization. Low complexity predominate over residues 352–368 (SASLSGSSSSSSSSRSR). Phosphoserine is present on residues Ser389, Ser391, Ser393, and Ser402. Thr406 carries the post-translational modification Phosphothreonine. A Phosphoserine modification is found at Ser414. A Phosphothreonine modification is found at Thr416. Phosphoserine occurs at positions 420, 429, 431, and 436. The segment covering 428–438 (VSVSPGRTSGK) has biased composition (polar residues). Residue Lys447 forms a Glycyl lysine isopeptide (Lys-Gly) (interchain with G-Cter in SUMO2) linkage. A phosphoserine mark is found at Ser450 and Ser452. Lys459 participates in a covalent cross-link: Glycyl lysine isopeptide (Lys-Gly) (interchain with G-Cter in SUMO2). Phosphoserine occurs at positions 463 and 465. Lys472 is covalently cross-linked (Glycyl lysine isopeptide (Lys-Gly) (interchain with G-Cter in SUMO2)). Ser478 is subject to Phosphoserine. Low complexity predominate over residues 478 to 501 (SVQQRRQYRRQNQQSSSDSGSSSS). A compositionally biased stretch (basic and acidic residues) spans 503-518 (EDERPKRSHVKNGEVG). Phosphoserine is present on residues Ser524, Ser526, Ser528, Ser530, Ser532, Ser563, and Ser565. Basic residues predominate over residues 557 to 574 (SGRRRRSPSPPPTRRRRS). Position 569 is a phosphothreonine (Thr569). A phosphoserine mark is found at Ser574 and Ser576. Over residues 581–606 (PRRRRTPTPPPRRRTPSPPPRRRSPS) the composition is skewed to basic residues. Residues Thr586, Thr588, and Thr595 each carry the phosphothreonine modification. Phosphoserine is present on Ser597. Over residues 607–619 (PRRYSPPIQRRYS) the composition is skewed to low complexity. At Tyr610 the chain carries Phosphotyrosine. Ser611, Ser619, and Ser621 each carry phosphoserine. Thr628 is modified (phosphothreonine). Residues Ser630, Ser640, Ser642, Ser650, and Ser652 each carry the phosphoserine modification. A compositionally biased stretch (basic residues) spans 635 to 650 (PKRRASPSPPPKRRVS). A compositionally biased stretch (basic residues) spans 663–677 (TKRRSPSLSSKHRKG). Over residues 699-713 (SPRPRAPQTSSPPPV) the composition is skewed to pro residues. Phosphoserine is present on residues Ser708, Ser709, Ser718, Ser720, Ser726, and Ser728. Composition is skewed to low complexity over residues 714–732 (RRGA…PSTR), 749–772 (AASP…SPEP), and 782–799 (SPVQ…AVPV). The residue at position 731 (Thr731) is a Phosphothreonine. Phosphoserine is present on residues Ser751, Ser753, Ser761, Ser765, Ser767, Ser769, Ser782, Ser786, Ser788, and Ser790. Thr791 carries the phosphothreonine modification. Phosphoserine occurs at positions 794 and 804. Residue Thr806 is modified to Phosphothreonine. Residues Ser808, Ser810, and Ser815 each carry the phosphoserine modification. Basic residues predominate over residues 822–847 (KKKKKKKDKKHKKDKKHKKHKKHKKE). The segment covering 850–879 (VAAAAAAAVTPAAIAAATTTLAQEEPVAAP) has biased composition (low complexity). Residue Lys882 forms a Glycyl lysine isopeptide (Lys-Gly) (interchain with G-Cter in SUMO2) linkage. At Thr885 the chain carries Phosphothreonine. The residue at position 887 (Ser887) is a Phosphoserine. Basic and acidic residues predominate over residues 895 to 905 (DLEKHLREKAL). Ser914 is modified (phosphoserine).

The protein belongs to the splicing factor SR family. As to quaternary structure, identified in the spliceosome C complex. Found in a pre-mRNA splicing complex with SFRS4, SFRS5, SNRP70, SNRPA1, SRRM1 and SRRM2. Component of the minor spliceosome, which splices U12-type introns. Found in a pre-mRNA exonic splicing enhancer (ESE) complex with SNRP70, SNRPA1, SRRM1 and TRA2B/SFRS10. Found in a mRNA splicing-dependent exon junction complex (EJC) with DEK, PRPF8, NCBP1, RBM8A, RNPS1, SRRM1 and ALYREF/THOC4. Interacts with DDX39B, CPSF1, RBM8A, RNPS1, and ALYREF/THOC4. Seems to be a compound of RNA export complexes that are released from speckles in a ATP-dependent manner. Phosphorylated on multiple serine and threonine residues by DYRK3 during the G2-to-M transition, after the nuclear-envelope breakdown. Phosphorylation by DYRK3 promotes disassembly of nuclear speckles. Post-translationally, citrullinated by PADI4.

Part of pre- and post-splicing multiprotein mRNP complexes. As a component of the minor spliceosome, involved in the splicing of U12-type introns in pre-mRNAs. Involved in numerous pre-mRNA processing events. Promotes constitutive and exonic splicing enhancer (ESE)-dependent splicing activation by bridging together sequence-specific (SR family proteins, SFRS4, SFRS5 and TRA2B/SFRS10) and basal snRNP (SNRP70 and SNRPA1) factors of the spliceosome. Stimulates mRNA 3'-end cleavage independently of the formation of an exon junction complex. Binds both pre-mRNA and spliced mRNA 20-25 nt upstream of exon-exon junctions. Binds RNA and DNA with low sequence specificity and has similar preference for either double- or single-stranded nucleic acid substrates. In Pongo abelii (Sumatran orangutan), this protein is Serine/arginine repetitive matrix protein 1 (SRRM1).